The chain runs to 373 residues: Glutamate 5-kinase (373 aa).

Lys15 contacts ATP. The substrate site is built by Ser55, Asp142, and Asn154. Residues 174–175 (TD) and 216–222 (TGGMVTK) contribute to the ATP site. The 79-residue stretch at 281 to 359 (SGKIIVDDGA…GEIEAILGYK (79 aa)) folds into the PUA domain.

This sequence belongs to the glutamate 5-kinase family.

It localises to the cytoplasm. The enzyme catalyses L-glutamate + ATP = L-glutamyl 5-phosphate + ADP. The protein operates within amino-acid biosynthesis; L-proline biosynthesis; L-glutamate 5-semialdehyde from L-glutamate: step 1/2. Functionally, catalyzes the transfer of a phosphate group to glutamate to form L-glutamate 5-phosphate. The sequence is that of Glutamate 5-kinase from Geobacter sulfurreducens (strain ATCC 51573 / DSM 12127 / PCA).